Consider the following 376-residue polypeptide: Zinc transporter 7 (376 aa).

Residues 1-37 are Cytoplasmic-facing; sequence MLPLSIKDDEYKPPKFNLFGKISGWFRSILSDKTSRN. Residues 38–58 traverse the membrane as a helical segment; it reads LFFFLCLNLSFAFVELLYGIW. Topologically, residues 59-67 are lumenal; that stretch reads SNCLGLISD. Residues 68-88 traverse the membrane as a helical segment; sequence SFHMFFDSTAILAGLAASVIS. Residues 89-102 are Cytoplasmic-facing; it reads KWRDNDAFSYGYVR. The chain crosses the membrane as a helical span at residues 103–123; it reads AEVLAGFVNGLFLIFTAFFIF. The Lumenal portion of the chain corresponds to 124 to 140; the sequence is SEGVERALAPPDVHHER. The chain crosses the membrane as a helical span at residues 141 to 161; it reads LLLVSILGFVVNLIGIFVFKH. A his-rich loop region spans residues 161 to 218; it reads HGGHGHSHGSGHGHSHSLFNGALDQAHGHVDHCHSHEVKHGAAHSHDHAHGHGHFHSH. The Cytoplasmic segment spans residues 162-236; that stretch reads GGHGHSHGSG…TGPSRQILQG (75 aa). Residues 194–222 are compositionally biased toward basic and acidic residues; the sequence is HSHEVKHGAAHSHDHAHGHGHFHSHDGPS. Residues 194 to 226 form a disordered region; it reads HSHEVKHGAAHSHDHAHGHGHFHSHDGPSLKET. A helical membrane pass occupies residues 237-257; the sequence is VFLHILADTLGSIGVIASAIM. The Lumenal portion of the chain corresponds to 258–262; that stretch reads MQNFG. The helical transmembrane segment at 263–283 threads the bilayer; the sequence is LMIADPICSILIAILIVVSVI. At 284-376 the chain is on the cytoplasmic side; that stretch reads PLLRESVGIL…LYVQIDFAAM (93 aa).

This sequence belongs to the cation diffusion facilitator (CDF) transporter (TC 2.A.4) family. SLC30A subfamily. In terms of assembly, homooligomer. Highly expressed in megakaryocytes and other bone marrow cells and in the epithelium of the small intestine. Expressed in testis (in Leydig cells), adrenal gland (in adrenal medula, zona fasciculata and zona of reticularis), and pituitary gland (in somatotropic cells).

Its subcellular location is the golgi apparatus membrane. It localises to the cytoplasmic vesicle. The protein localises to the golgi apparatus. It is found in the trans-Golgi network. The protein resides in the sarcoplasmic reticulum. Its subcellular location is the mitochondrion. The catalysed reaction is Zn(2+)(in) = Zn(2+)(out). Functionally, zinc ion transporter mediating zinc entry from the cytosol into the lumen of organelles along the secretory pathway. By contributing to zinc ion homeostasis within the early secretory pathway, regulates the activation and folding of enzymes like alkaline phosphatases. In Homo sapiens (Human), this protein is Zinc transporter 7.